Here is a 457-residue protein sequence, read N- to C-terminus: L-asparaginase-like protein GL17509 (457 aa).

Positions 1–20 are cleaved as a signal peptide; the sequence is MRYLCRAQLLSLLLLPLLKA. 3 cysteine pairs are disulfide-bonded: Cys72-Cys78, Cys172-Cys188, and Cys327-Cys354.

Belongs to the Ntn-hydrolase family.

This chain is L-asparaginase-like protein GL17509, found in Drosophila persimilis (Fruit fly).